A 227-amino-acid chain; its full sequence is Transcriptional regulatory protein CusR (227 aa).

Residues 2-116 (KLLIVEDEKK…ELLARVRTLL (115 aa)) enclose the Response regulatory domain. Aspartate 51 carries the 4-aspartylphosphate modification. The segment at residues 125–223 (ESQFQVADLM…VRGVGYMLEV (99 aa)) is a DNA-binding region (ompR/PhoB-type).

In terms of processing, phosphorylated by CusS.

It is found in the cytoplasm. Functionally, member of the two-component regulatory system CusS/CusR involved in response to copper and silver. In Escherichia coli O6:H1 (strain CFT073 / ATCC 700928 / UPEC), this protein is Transcriptional regulatory protein CusR (cusR).